Consider the following 269-residue polypeptide: tRNA pseudouridine synthase A (269 aa).

Asp-51 functions as the Nucleophile in the catalytic mechanism. Tyr-109 is a binding site for substrate.

It belongs to the tRNA pseudouridine synthase TruA family. Homodimer.

The enzyme catalyses uridine(38/39/40) in tRNA = pseudouridine(38/39/40) in tRNA. Functionally, formation of pseudouridine at positions 38, 39 and 40 in the anticodon stem and loop of transfer RNAs. This Aeromonas hydrophila subsp. hydrophila (strain ATCC 7966 / DSM 30187 / BCRC 13018 / CCUG 14551 / JCM 1027 / KCTC 2358 / NCIMB 9240 / NCTC 8049) protein is tRNA pseudouridine synthase A.